The sequence spans 493 residues: 3-octaprenyl-4-hydroxybenzoate carboxy-lyase (493 aa).

N172 lines the Mn(2+) pocket. Prenylated FMN is bound by residues 175–177 (IYR), 189–191 (RWL), and 194–195 (RG). E238 is a binding site for Mn(2+). The Proton donor role is filled by D287.

It belongs to the UbiD family. As to quaternary structure, homohexamer. It depends on prenylated FMN as a cofactor. Mn(2+) is required as a cofactor.

The protein resides in the cell membrane. The enzyme catalyses a 4-hydroxy-3-(all-trans-polyprenyl)benzoate + H(+) = a 2-(all-trans-polyprenyl)phenol + CO2. It functions in the pathway cofactor biosynthesis; ubiquinone biosynthesis. Its function is as follows. Catalyzes the decarboxylation of 3-octaprenyl-4-hydroxy benzoate to 2-octaprenylphenol, an intermediate step in ubiquinone biosynthesis. The polypeptide is 3-octaprenyl-4-hydroxybenzoate carboxy-lyase (Shewanella putrefaciens (strain CN-32 / ATCC BAA-453)).